The sequence spans 64 residues: Large ribosomal subunit protein uL1 (64 aa).

Belongs to the universal ribosomal protein uL1 family. As to quaternary structure, part of the 50S ribosomal subunit.

Binds directly to 23S rRNA. The L1 stalk is quite mobile in the ribosome, and is involved in E site tRNA release. Functionally, protein L1 is also a translational repressor protein, it controls the translation of the L11 operon by binding to its mRNA. The polypeptide is Large ribosomal subunit protein uL1 (rplA) (Streptomyces lavendulae).